The sequence spans 302 residues: uncharacterized protein (302 aa).

The HTH lysR-type domain maps to Met-1–Thr-60. The H-T-H motif DNA-binding region spans Phe-20–Thr-40.

This sequence belongs to the LysR transcriptional regulatory family.

This is an uncharacterized protein from Escherichia coli (strain K12).